The following is an 889-amino-acid chain: MDARGGGGRPGESPGATPAPGPPPPPPPAPPQQQPPPPPPPAPPPGPGPAPPQHPPRAEALPPEAADEGGPRGRLRSRDSSCGRPGTPGAASTAKGSPNGECGRGEPQCSPAGPEGPARGPKVSFSCRGAASGPAPGPGPAEEAGSEEAGPAGEPRGSQASFMQRQFGALLQPGVNKFSLRMFGSQKAVEREQERVKSAGAWIIHPYSDFRFYWDFTMLLFMVGNLIIIPVGITFFKDETTAPWIVFNVVSDTFFLMDLVLNFRTGIVIEDNTEIILDPEKIKKKYLRTWFVVDFVSSIPVDYIFLIVEKGIDSEVYKTARALRIVRFTKILSLLRLLRLSRLIRYIHQWEEIFHMTYDLASAVMRICNLISMMLLLCHWDGCLQFLVPMLQDFPRNCWVSINGMVNHSWSELYSFALFKAMSHMLCIGYGRQAPESMTDIWLTMLSMIVGATCYAMFIGHATALIQSLDSSRRQYQEKYKQVEQYMSFHKLPADFRQKIHDYYEHRYQGKMFDEDSILGELNGPLREEIVNFNCRKLVASMPLFANADPNFVTAMLTKLKFEVFQPGDYIIREGTIGKKMYFIQHGVVSVLTKGNKEMKLSDGSYFGEICLLTRGRRTASVRADTYCRLYSLSVDNFNEVLEEYPMMRRAFETVAIDRLDRIGKKNSILLHKVQHDLNSGVFNNQENAIIQEIVKYDREMVQQAELGQRVGLFPPPPPPPQVTSAIATLQQAAAMSFCPQVARPLVGPLALGSPRLVRRPPPGPAPAAASPGPPPPASPPGAPASPRAPRTSPYGGLPAAPLAGPALPARRLSRASRPLSASQPSLPHGAPGPAASTRPASSSTPRLGPTPAARAAAPSPDRRDSASPGAAGGLDPQDSARSRLSSNL.

The segment covering 1–10 (MDARGGGGRP) has biased composition (gly residues). A disordered region spans residues 1 to 159 (MDARGGGGRP…GPAGEPRGSQ (159 aa)). The Cytoplasmic portion of the chain corresponds to 1 to 215 (MDARGGGGRP…PYSDFRFYWD (215 aa)). Residues 17-55 (TPAPGPPPPPPPAPPQQQPPPPPPPAPPPGPGPAPPQHP) are compositionally biased toward pro residues. Over residues 129–155 (GAASGPAPGPGPAEEAGSEEAGPAGEP) the composition is skewed to low complexity. Residues Ser-146 and Ser-161 each carry the phosphoserine modification. The segment at 158–209 (SQASFMQRQFGALLQPGVNKFSLRMFGSQKAVEREQERVKSAGAWIIHPYSD) is involved in subunit assembly. A helical membrane pass occupies residues 216-236 (FTMLLFMVGNLIIIPVGITFF). Residues 237 to 240 (KDET) are Extracellular-facing. Residues 241 to 261 (TAPWIVFNVVSDTFFLMDLVL) form a helical membrane-spanning segment. The Cytoplasmic segment spans residues 262-288 (NFRTGIVIEDNTEIILDPEKIKKKYLR). A helical membrane pass occupies residues 289–309 (TWFVVDFVSSIPVDYIFLIVE). Residues 310–317 (KGIDSEVY) are Extracellular-facing. The chain crosses the membrane as a helical; Voltage-sensor span at residues 318–338 (KTARALRIVRFTKILSLLRLL). Residues 339–369 (RLSRLIRYIHQWEEIFHMTYDLASAVMRICN) are Cytoplasmic-facing. Residues 370-390 (LISMMLLLCHWDGCLQFLVPM) form a helical membrane-spanning segment. At 391 to 413 (LQDFPRNCWVSINGMVNHSWSEL) the chain is on the extracellular side. N-linked (GlcNAc...) asparagine glycosylation occurs at Asn-407. Residues 414-435 (YSFALFKAMSHMLCIGYGRQAP) constitute an intramembrane region (pore-forming). Over 436–440 (ESMTD) the chain is Extracellular. The helical transmembrane segment at 441-461 (IWLTMLSMIVGATCYAMFIGH) threads the bilayer. Topologically, residues 462-889 (ATALIQSLDS…SARSRLSSNL (428 aa)) are cytoplasmic. Residues Met-599, Gly-608, Glu-609, Ile-610, Cys-611, Arg-618, Thr-619, and Arg-659 each contribute to the 3',5'-cyclic AMP site. The residue at position 668 (Ser-668) is a Phosphoserine; by PKG/PRKG2. Ser-754 bears the Phosphoserine mark. Residues 754–889 (SPRLVRRPPP…SARSRLSSNL (136 aa)) form a disordered region. The residue at position 756 (Arg-756) is an Omega-N-methylarginine. Residues 760–784 (RPPPGPAPAAASPGPPPPASPPGAP) show a composition bias toward pro residues. Ser-771, Ser-779, Ser-786, Ser-866, and Ser-868 each carry phosphoserine. Residues 785-860 (ASPRAPRTSP…TPAARAAAPS (76 aa)) show a composition bias toward low complexity.

The protein belongs to the potassium channel HCN family. As to quaternary structure, homotetramer. The channel is composed of a homo- or heterotetrameric complex of pore-forming subunits. Heterotetramer with HCN1. Forms an obligate 4:4 complex with accessory subunit PEX5L. Interacts with KCNE2. Phosphorylation at Ser-668 by PRKG2 shifts the voltage-dependence to more negative voltages, hence counteracting the stimulatory effect of cGMP on gating. In terms of processing, S-palmitoylated. Post-translationally, N-glycosylated; required for cell surface trafficking of HCN2. As to expression, highly expressed throughout the brain. Detected at low levels in heart.

The protein localises to the cell membrane. The enzyme catalyses Na(+)(in) = Na(+)(out). It catalyses the reaction K(+)(in) = K(+)(out). It carries out the reaction NH4(+)(in) = NH4(+)(out). With respect to regulation, activated by cAMP, and at 10-100 times higher concentrations, also by cGMP. cAMP binding causes a conformation change that leads to the assembly of an active tetramer and channel opening. Binding of cAMP removes a tonic inhibition conferred by cyclic nucleotide-binding domain (CNBD) on channel opening. Channel activity is modulated by intracellular chloride ions and pH; acidic pH shifts the activation to more negative voltages. Inhibited by extracellular cesium ions. Functionally, hyperpolarization-activated ion channel that is permeable to sodium and potassium ions. Displays lower selectivity for K(+) over Na(+) ions. Contributes to the native pacemaker currents in heart (If) and in neurons (Ih). Can also transport ammonium in the distal nephron. Involved in the initiation of neuropathic pain in sensory neurons. This chain is Potassium/sodium hyperpolarization-activated cyclic nucleotide-gated channel 2, found in Homo sapiens (Human).